Reading from the N-terminus, the 49-residue chain is Large ribosomal subunit protein bL33 (49 aa).

The protein belongs to the bacterial ribosomal protein bL33 family.

This is Large ribosomal subunit protein bL33 from Caldanaerobacter subterraneus subsp. tengcongensis (strain DSM 15242 / JCM 11007 / NBRC 100824 / MB4) (Thermoanaerobacter tengcongensis).